A 211-amino-acid polypeptide reads, in one-letter code: MGQKCNPIGLRLKIINTWDSLWYANKDYTTKLHEDFLLRKFIKKAFYHAAISKVVIARKVDLIMVNVYSAKPGVIIGKKGADIDKVKQQIVKMINNNIELNIIEVKKPELKAVLIAENIAQQLEKRISFRRAMKRSVQNCLKIGAKGIKVSCAGRLGGAEIARTEWYKEGSVPLHTFRANIDYGFSEAKTIYGIIGVKVWVYLGETKSSNE.

Residues leucine 38 to lysine 106 enclose the KH type-2 domain.

The protein belongs to the universal ribosomal protein uS3 family. In terms of assembly, part of the 30S ribosomal subunit. Forms a tight complex with proteins S10 and S14.

Its function is as follows. Binds the lower part of the 30S subunit head. Binds mRNA in the 70S ribosome, positioning it for translation. This chain is Small ribosomal subunit protein uS3, found in Ehrlichia canis (strain Jake).